The chain runs to 65 residues: Antimicrobial peptide 1 (65 aa).

Positions 1–27 are cleaved as a signal peptide; the sequence is MAKVSSAYLKFALVMILLLSVISAVMS. 3 cysteine pairs are disulfide-bonded: Cys30/Cys47, Cys37/Cys51, and Cys46/Cys62.

The protein belongs to the AMP family. In terms of tissue distribution, seed specific.

The protein localises to the secreted. In terms of biological role, possesses antifungal activity. This is Antimicrobial peptide 1 from Phytolacca americana (American pokeweed).